The primary structure comprises 497 residues: Glycerol kinase (497 aa).

Threonine 11 serves as a coordination point for ADP. Positions 11, 12, and 13 each coordinate ATP. A sn-glycerol 3-phosphate-binding site is contributed by threonine 11. Arginine 15 contacts ADP. Residues arginine 81, glutamate 82, tyrosine 133, and aspartate 242 each coordinate sn-glycerol 3-phosphate. The glycerol site is built by arginine 81, glutamate 82, tyrosine 133, aspartate 242, and glutamine 243. ADP contacts are provided by threonine 264 and glycine 306. Residues threonine 264, glycine 306, glutamine 310, and glycine 407 each coordinate ATP. 2 residues coordinate ADP: glycine 407 and asparagine 411.

It belongs to the FGGY kinase family.

It catalyses the reaction glycerol + ATP = sn-glycerol 3-phosphate + ADP + H(+). The protein operates within polyol metabolism; glycerol degradation via glycerol kinase pathway; sn-glycerol 3-phosphate from glycerol: step 1/1. Its activity is regulated as follows. Inhibited by fructose 1,6-bisphosphate (FBP). Key enzyme in the regulation of glycerol uptake and metabolism. Catalyzes the phosphorylation of glycerol to yield sn-glycerol 3-phosphate. The polypeptide is Glycerol kinase (Alcanivorax borkumensis (strain ATCC 700651 / DSM 11573 / NCIMB 13689 / SK2)).